Reading from the N-terminus, the 1950-residue chain is E3 ubiquitin-protein ligase UBR1 (1950 aa).

Zn(2+) is bound by residues His118, Cys123, Cys136, Cys139, Cys148, Cys151, His157, His160, His161, Cys175, Cys177, and Cys189. The segment at 121–194 (RNCGRKFKIG…SPLHCKAEEQ (74 aa)) adopts a UBR-type zinc-finger fold. Phosphoserine occurs at positions 296 and 300. A ubiquitin-binding loop region spans residues 678-681 (HVLH). Asp952 serves as a coordination point for Zn(2+). The interval 1165–1200 (KERKRRLAKKHQARLLAKFNNQQTKFMKEHESEFDE) is UBC2-binding region (U2BR). Zn(2+)-binding residues include Cys1220, Cys1223, Cys1295, His1297, His1300, Cys1303, Cys1320, and Cys1323. The segment at 1220–1324 (CALCQDSSST…SNAFICPLCQ (105 aa)) adopts an RING-type; atypical zinc-finger fold. A cap helical domain (CHD) region spans residues 1333–1665 (LCQTSKANTG…YEYCGIIKLI (333 aa)). 6 residues coordinate Zn(2+): Cys1703, Cys1706, His1722, Cys1727, His1763, and Asp1775. Disordered stretches follow at residues 1826–1846 (RPRRIPPTDEDDEDMEEGEDG) and 1893–1950 (TLQP…REIW). Acidic residues-rich tracts occupy residues 1833–1846 (TDEDDEDMEEGEDG) and 1934–1950 (DEDDSDDNDDSDEREIW). A Phosphoserine modification is found at Ser1938.

The protein belongs to the E3 ubiquitin-protein ligase UBR1-like family. Interacts with UBC2. Interacts with RPN2, RPT1 and RPT6 from the 26S proteasome.

The enzyme catalyses S-ubiquitinyl-[E2 ubiquitin-conjugating enzyme]-L-cysteine + [acceptor protein]-L-lysine = [E2 ubiquitin-conjugating enzyme]-L-cysteine + N(6)-ubiquitinyl-[acceptor protein]-L-lysine.. It functions in the pathway protein modification; protein ubiquitination. In terms of biological role, ubiquitin ligase protein which is a component of the N-end rule pathway. Recognizes and binds to proteins bearing specific N-terminal residues that are destabilizing according to the N-end rule, leading to their ubiquitination and subsequent degradation. Recognizes both type-1 and type-2 N-degrons, containing positively charged amino acids (Arg, Lys and His) and bulky and hydrophobic amino acids, respectively. The chain is E3 ubiquitin-protein ligase UBR1 from Saccharomyces cerevisiae (strain ATCC 204508 / S288c) (Baker's yeast).